The chain runs to 707 residues: Polyribonucleotide nucleotidyltransferase (707 aa).

Residues D486 and D492 each contribute to the Mg(2+) site. Residues 553–612 (PRIHKIKINPEKIKDVIGKGGSVIRMLTEETGTIIEIEDDGTIKISATIGEKAKNAIRRI) enclose the KH domain. An S1 motif domain is found at 622-690 (GRIYSGKVTR…RQGRLRLSIK (69 aa)).

This sequence belongs to the polyribonucleotide nucleotidyltransferase family. As to quaternary structure, component of the RNA degradosome, which is a multiprotein complex involved in RNA processing and mRNA degradation. Mg(2+) is required as a cofactor.

It localises to the cytoplasm. The catalysed reaction is RNA(n+1) + phosphate = RNA(n) + a ribonucleoside 5'-diphosphate. In terms of biological role, involved in mRNA degradation. Catalyzes the phosphorolysis of single-stranded polyribonucleotides processively in the 3'- to 5'-direction. The polypeptide is Polyribonucleotide nucleotidyltransferase (Buchnera aphidicola subsp. Schizaphis graminum (strain Sg)).